Consider the following 412-residue polypeptide: Multifunctional CCA protein (412 aa).

2 residues coordinate ATP: glycine 8 and arginine 11. Glycine 8 and arginine 11 together coordinate CTP. Residues aspartate 21 and aspartate 23 each contribute to the Mg(2+) site. Residues arginine 91, arginine 137, and arginine 140 each coordinate ATP. CTP is bound by residues arginine 91, arginine 137, and arginine 140. The region spanning 228–329 is the HD domain; sequence TGIHTLMTLS…VKLFDSIDAW (102 aa).

The protein belongs to the tRNA nucleotidyltransferase/poly(A) polymerase family. Bacterial CCA-adding enzyme type 1 subfamily. Monomer. Can also form homodimers and oligomers. Mg(2+) serves as cofactor. Requires Ni(2+) as cofactor.

It carries out the reaction a tRNA precursor + 2 CTP + ATP = a tRNA with a 3' CCA end + 3 diphosphate. The catalysed reaction is a tRNA with a 3' CCA end + 2 CTP + ATP = a tRNA with a 3' CCACCA end + 3 diphosphate. Catalyzes the addition and repair of the essential 3'-terminal CCA sequence in tRNAs without using a nucleic acid template. Adds these three nucleotides in the order of C, C, and A to the tRNA nucleotide-73, using CTP and ATP as substrates and producing inorganic pyrophosphate. tRNA 3'-terminal CCA addition is required both for tRNA processing and repair. Also involved in tRNA surveillance by mediating tandem CCA addition to generate a CCACCA at the 3' terminus of unstable tRNAs. While stable tRNAs receive only 3'-terminal CCA, unstable tRNAs are marked with CCACCA and rapidly degraded. This is Multifunctional CCA protein from Escherichia coli O157:H7.